A 263-amino-acid chain; its full sequence is Small ribosomal subunit protein eS4 (263 aa).

Positions 42–104 (LPLIVFLRNR…TGEHFRLVYD (63 aa)) constitute an S4 RNA-binding domain.

It belongs to the eukaryotic ribosomal protein eS4 family.

This chain is Small ribosomal subunit protein eS4 (RPS4Y1), found in Gorilla gorilla gorilla (Western lowland gorilla).